We begin with the raw amino-acid sequence, 113 residues long: Heavy metal-associated isoprenylated plant protein 15 (113 aa).

The 65-residue stretch at 1–65 (MIVWMGVYDQ…KWGKAKLTLY (65 aa)) folds into the HMA domain. Positions 69–89 (DALKEAKIAEAKQKREEIERE) form a coiled coil. The residue at position 110 (C110) is a Cysteine methyl ester. C110 carries S-farnesyl cysteine lipidation. A propeptide spans 111 to 113 (VIC) (removed in mature form).

Belongs to the HIPP family. Expressed in embryo sacs.

In terms of biological role, probable heavy-metal-binding protein. The chain is Heavy metal-associated isoprenylated plant protein 15 from Arabidopsis thaliana (Mouse-ear cress).